A 120-amino-acid chain; its full sequence is MDYEFLRDITGVVKVRMSMDHEAIGHWFNEEVKGNLALLDEVEQAARTVKGSERSWQRAGHEYTLWLDGEEVMIRANQLEFSGDEIEEGMSYYDEESLSLCGVEDFLQVVAAYREFMQQR.

It belongs to the UPF0231 family.

The chain is UPF0231 protein KPN78578_01240 from Klebsiella pneumoniae subsp. pneumoniae (strain ATCC 700721 / MGH 78578).